We begin with the raw amino-acid sequence, 258 residues long: Spindlin-3 (258 aa).

Residues 1–23 (MKTPFGKAAAGQRSRTGAGHGSV) form a disordered region. 3 tudor-like domain regions span residues 50-99 (VGCR…LELH), 129-178 (VGKA…YQLL), and 210-255 (VGKQ…YDLV). Histone H3K4me3 and H3R8me2a binding regions lie at residues glutamate 138 and 246–248 (DFH).

It belongs to the SPIN/STSY family. In terms of assembly, interacts with C11orf84/SPINDOC.

Functionally, exhibits H3K4me3-binding activity. The chain is Spindlin-3 (SPIN3) from Pongo abelii (Sumatran orangutan).